A 1136-amino-acid chain; its full sequence is Phytochrome (1136 aa).

The segment at 1 to 28 is disordered; sequence MSTTRPRAATHSASSGSVSRSSKHSARV. The span at 11-20 shows a compositional bias: low complexity; that stretch reads HSASSGSVSR. The 184-residue stretch at 231 to 414 folds into the GAF domain; sequence DIRLLCDTVV…VFGIQLNKEV (184 aa). Cysteine 336 provides a ligand contact to phytochromobilin. PAS domains are found at residues 629–699 and 762–833; these read VTNE…LQGE and DYRA…TKLR. Positions 913–1132 constitute a Histidine kinase domain; sequence YIRQEIRNPL…IINVEFPLAQ (220 aa).

The protein belongs to the phytochrome family. In terms of assembly, homodimer. In terms of processing, contains one covalently linked phytochromobilin chromophore.

Regulatory photoreceptor which exists in two forms that are reversibly interconvertible by light: the Pr form that absorbs maximally in the red region of the spectrum and the Pfr form that absorbs maximally in the far-red region. Photoconversion of Pr to Pfr induces an array of morphogenic responses, whereas reconversion of Pfr to Pr cancels the induction of those responses. Pfr controls the expression of a number of nuclear genes including those encoding the small subunit of ribulose-bisphosphate carboxylase, chlorophyll A/B binding protein, protochlorophyllide reductase, rRNA, etc. It also controls the expression of its own gene(s) in a negative feedback fashion. This Picea abies (Norway spruce) protein is Phytochrome.